The primary structure comprises 1222 residues: Chitin synthase 4 (1222 aa).

2 disordered regions span residues 1 to 101 (MSLP…ERNR) and 138 to 200 (TERT…KRIE). Composition is skewed to polar residues over residues 11 to 24 (QAYN…NSPS) and 42 to 77 (NQAS…SPDG). Basic residues predominate over residues 182–196 (SGKIKRKSRRHSKPP). The next 2 membrane-spanning stretches (helical) occupy residues 205 to 225 (PPTF…GFIM) and 243 to 263 (MGLI…TFGF). N-linked (GlcNAc...) asparagine glycans are attached at residues Asn378, Asn418, and Asn440. The chain crosses the membrane as a helical span at residues 513-533 (ALILSVVGVRFFLAIIFQWFI). A disordered region spans residues 576–630 (TVYGSSDRSSKRASFLPTTSRFSSVGGPDIRSQGGRRMPTTMASQSTSNQLLTPN). The segment covering 616-630 (TMASQSTSNQLLTPN) has biased composition (polar residues). 2 N-linked (GlcNAc...) asparagine glycosylation sites follow: Asn637 and Asn1030. 3 helical membrane passes run 1055–1075 (FIIF…AFTF), 1089–1109 (IIPL…VIIT), and 1113–1133 (WSYI…NFVL). Positions 1202 to 1222 (GGQTWTSPPGHQYNEEYYSDA) are disordered.

Belongs to the chitin synthase family. Class IV subfamily.

It is found in the cell membrane. The enzyme catalyses [(1-&gt;4)-N-acetyl-beta-D-glucosaminyl](n) + UDP-N-acetyl-alpha-D-glucosamine = [(1-&gt;4)-N-acetyl-beta-D-glucosaminyl](n+1) + UDP + H(+). Its function is as follows. Polymerizes chitin, a structural polymer of the cell wall and septum, by transferring the sugar moiety of UDP-GlcNAc to the non-reducing end of the growing chitin polymer. Shows additive effects in septum formation with CHS1, CHS2, CHS3A, CHS5, CHS6 and CHS7. Regulates conidiation. Involved in virulence and mediates mycotoxin deoxinivalenol (DON) biosynthesis via the regulation of the expression of TRI4, TRI5 and TRI6. The polypeptide is Chitin synthase 4 (Gibberella zeae (strain ATCC MYA-4620 / CBS 123657 / FGSC 9075 / NRRL 31084 / PH-1) (Wheat head blight fungus)).